Here is a 620-residue protein sequence, read N- to C-terminus: tRNA uridine 5-carboxymethylaminomethyl modification enzyme MnmG (620 aa).

Residues 13 to 18, valine 125, and serine 182 each bind FAD; that span reads GGGHAG. NAD(+) is bound at residue 280–294; it reads GPRYCPSVEDKIVKF. Asparagine 377 lines the FAD pocket.

It belongs to the MnmG family. As to quaternary structure, homodimer. Heterotetramer of two MnmE and two MnmG subunits. The cofactor is FAD.

Its subcellular location is the cytoplasm. NAD-binding protein involved in the addition of a carboxymethylaminomethyl (cmnm) group at the wobble position (U34) of certain tRNAs, forming tRNA-cmnm(5)s(2)U34. This is tRNA uridine 5-carboxymethylaminomethyl modification enzyme MnmG from Sulfurihydrogenibium sp. (strain YO3AOP1).